Consider the following 1001-residue polypeptide: Copper-transporting ATPase RAN1 (1001 aa).

Positions Met-1–Ile-21 are disordered. Residues Met-1–Arg-298 are Cytoplasmic-facing. Over residues Thr-11–Ile-21 the composition is skewed to polar residues. 2 HMA domains span residues Arg-56–Glu-122 and Leu-133–Ser-199. 4 residues coordinate Cu(+): Cys-67, Cys-70, Cys-144, and Cys-147. Positions Asp-207–Phe-273 constitute an HMA 3; degenerate domain. A helical transmembrane segment spans residues Phe-299–Ala-320. The Extracellular portion of the chain corresponds to Leu-321–Trp-338. A helical transmembrane segment spans residues Leu-339–Ala-358. Topologically, residues Ala-359–Asn-365 are cytoplasmic. Residues Gly-366–Val-386 traverse the membrane as a helical segment. Topologically, residues Gly-387–Phe-403 are extracellular. A helical membrane pass occupies residues Asp-404 to Lys-424. The Cytoplasmic segment spans residues Gly-425–Tyr-558. The helical transmembrane segment at Val-559–Gly-581 threads the bilayer. Residues Gly-582–Ser-602 lie on the Extracellular side of the membrane. Residues Leu-603–Leu-620 traverse the membrane as a helical segment. The Cytoplasmic segment spans residues Ala-621–Ile-931. Asp-658 functions as the 4-aspartylphosphate intermediate in the catalytic mechanism. Mg(2+) is bound by residues Asp-877 and Asp-881. Residues Arg-932–Gly-951 traverse the membrane as a helical segment. At Val-952–Pro-963 the chain is on the extracellular side. The helical transmembrane segment at Trp-964–Leu-982 threads the bilayer. At Leu-983 to Glu-1001 the chain is on the cytoplasmic side.

It belongs to the cation transport ATPase (P-type) (TC 3.A.3) family. Type IB subfamily.

It localises to the membrane. It catalyses the reaction Cu(+)(in) + ATP + H2O = Cu(+)(out) + ADP + phosphate + H(+). Its function is as follows. Involved in copper import into the cell. Essential for ethylene signaling, which requires copper. Acts by delivering copper to create functional hormone receptors. This is Copper-transporting ATPase RAN1 (RAN1) from Arabidopsis thaliana (Mouse-ear cress).